The sequence spans 216 residues: Phosphoserine phosphatase (216 aa).

Aspartate 10 functions as the Nucleophile in the catalytic mechanism. Residues aspartate 10 and aspartate 12 each contribute to the Mg(2+) site. The active-site Proton donor is the aspartate 12. Substrate contacts are provided by residues glutamate 19, arginine 55, 98-99, and lysine 143; that span reads SG. Aspartate 166 serves as a coordination point for Mg(2+). Asparagine 169 is a binding site for substrate.

It belongs to the HAD-like hydrolase superfamily. SerB family. Mg(2+) serves as cofactor.

It catalyses the reaction O-phospho-L-serine + H2O = L-serine + phosphate. It carries out the reaction O-phospho-D-serine + H2O = D-serine + phosphate. Its pathway is amino-acid biosynthesis; L-serine biosynthesis; L-serine from 3-phospho-D-glycerate: step 3/3. The sequence is that of Phosphoserine phosphatase from Lactococcus lactis subsp. lactis (strain IL1403) (Streptococcus lactis).